Reading from the N-terminus, the 346-residue chain is Protein RecA (346 aa).

Residue 65 to 72 coordinates ATP; sequence GPESSGKT.

Belongs to the RecA family.

The protein localises to the cytoplasm. Functionally, can catalyze the hydrolysis of ATP in the presence of single-stranded DNA, the ATP-dependent uptake of single-stranded DNA by duplex DNA, and the ATP-dependent hybridization of homologous single-stranded DNAs. It interacts with LexA causing its activation and leading to its autocatalytic cleavage. The polypeptide is Protein RecA (Pseudomonas aeruginosa (strain UCBPP-PA14)).